The following is a 565-amino-acid chain: Mitochondrial distribution and morphology protein 34 (565 aa).

Residues methionine 1–glutamate 208 form the SMP-LTD domain. A compositionally biased stretch (polar residues) spans serine 209 to glycine 220. 3 disordered regions span residues serine 209–leucine 241, phenylalanine 347–alanine 463, and methionine 533–histidine 565. Over residues proline 353–arginine 367 the composition is skewed to basic residues. Residues valine 368–aspartate 378 show a composition bias toward basic and acidic residues. Residues serine 382–serine 391 show a composition bias toward low complexity. Polar residues-rich tracts occupy residues glutamate 392–serine 402 and glutamine 439–alanine 463.

The protein belongs to the MDM34 family. As to quaternary structure, component of the ER-mitochondria encounter structure (ERMES) or MDM complex, composed of mmm1, mdm10, mdm12 and mdm34.

Its subcellular location is the mitochondrion outer membrane. Its function is as follows. Component of the ERMES/MDM complex, which serves as a molecular tether to connect the endoplasmic reticulum (ER) and mitochondria. Components of this complex are involved in the control of mitochondrial shape and protein biogenesis, and function in nonvesicular lipid trafficking between the ER and mitochondria. Mdm34 is required for the interaction of the ER-resident membrane protein mmm1 and the outer mitochondrial membrane-resident beta-barrel protein mdm10. The protein is Mitochondrial distribution and morphology protein 34 of Talaromyces marneffei (strain ATCC 18224 / CBS 334.59 / QM 7333) (Penicillium marneffei).